The primary structure comprises 1436 residues: DNA polymerase III PolC-type (1436 aa).

Positions Y420 to F576 constitute an Exonuclease domain.

The protein belongs to the DNA polymerase type-C family. PolC subfamily.

It is found in the cytoplasm. The enzyme catalyses DNA(n) + a 2'-deoxyribonucleoside 5'-triphosphate = DNA(n+1) + diphosphate. Its function is as follows. Required for replicative DNA synthesis. This DNA polymerase also exhibits 3' to 5' exonuclease activity. In Staphylococcus aureus (strain MW2), this protein is DNA polymerase III PolC-type.